A 329-amino-acid chain; its full sequence is Probable alpha-1,2-galactosyltransferase gmh1 (329 aa).

Residues 1-14 (MLSFFTKNTLTKRK) lie on the Cytoplasmic side of the membrane. Residues 15–35 (LIMLALAIVFTFFAFGLYFIP) traverse the membrane as a helical; Signal-anchor for type II membrane protein segment. Topologically, residues 36 to 329 (HDEISVFDFK…LWTKYKDKII (294 aa)) are lumenal. N-linked (GlcNAc...) asparagine glycans are attached at residues asparagine 127 and asparagine 169.

The protein belongs to the glycosyltransferase 34 family.

Its subcellular location is the golgi apparatus membrane. The protein is Probable alpha-1,2-galactosyltransferase gmh1 (gmh1) of Schizosaccharomyces pombe (strain 972 / ATCC 24843) (Fission yeast).